Here is a 209-residue protein sequence, read N- to C-terminus: Putative NAD(P)H nitroreductase YdgI (209 aa).

Residues 14–16 (RRS), 72–74 (QTQ), 161–162 (GG), and Arg-199 contribute to the FMN site.

Belongs to the nitroreductase family. Requires FMN as cofactor.

The sequence is that of Putative NAD(P)H nitroreductase YdgI (ydgI) from Bacillus subtilis (strain 168).